The following is a 511-amino-acid chain: 2-isopropylmalate synthase (511 aa).

The 263-residue stretch at 4-266 (IDIFDTTLRD…ETGIQLQEIK (263 aa)) folds into the Pyruvate carboxyltransferase domain. Mn(2+) contacts are provided by aspartate 13, histidine 201, histidine 203, and asparagine 237. The regulatory domain stretch occupies residues 392-511 (ELKMVQVQYG…IKESLRAHPV (120 aa)).

The protein belongs to the alpha-IPM synthase/homocitrate synthase family. LeuA type 1 subfamily. In terms of assembly, homodimer. Requires Mn(2+) as cofactor.

The protein resides in the cytoplasm. It carries out the reaction 3-methyl-2-oxobutanoate + acetyl-CoA + H2O = (2S)-2-isopropylmalate + CoA + H(+). Its pathway is amino-acid biosynthesis; L-leucine biosynthesis; L-leucine from 3-methyl-2-oxobutanoate: step 1/4. Functionally, catalyzes the condensation of the acetyl group of acetyl-CoA with 3-methyl-2-oxobutanoate (2-ketoisovalerate) to form 3-carboxy-3-hydroxy-4-methylpentanoate (2-isopropylmalate). The sequence is that of 2-isopropylmalate synthase from Lysinibacillus sphaericus (strain C3-41).